We begin with the raw amino-acid sequence, 161 residues long: RNA pyrophosphohydrolase (161 aa).

In terms of domain architecture, Nudix hydrolase spans 12–154 (PYRPGVGMMI…KRKLYQAVVK (143 aa)). A Nudix box motif is present at residues 46–67 (GGIVPGETPSIAAMREMLEEIG).

It belongs to the Nudix hydrolase family. RppH subfamily. The cofactor is a divalent metal cation.

Functionally, accelerates the degradation of transcripts by removing pyrophosphate from the 5'-end of triphosphorylated RNA, leading to a more labile monophosphorylated state that can stimulate subsequent ribonuclease cleavage. The chain is RNA pyrophosphohydrolase from Rickettsia typhi (strain ATCC VR-144 / Wilmington).